Here is a 509-residue protein sequence, read N- to C-terminus: Dol-P-Glc:Glc(2)Man(9)GlcNAc(2)-PP-Dol alpha-1,2-glucosyltransferase (509 aa).

The Cytoplasmic segment spans residues 1–4; that stretch reads MGKL. The helical transmembrane segment at 5 to 25 threads the bilayer; that stretch reads AVAAITSLWVIPMSIIVNHIV. Over 26–57 the chain is Lumenal; that stretch reads PEPYMDEIFHVPQAQQYCNGNFRSWDPMITTP. A helical transmembrane segment spans residues 58 to 78; sequence PGLYYLSLAHVASLFPGMLLM. The Cytoplasmic portion of the chain corresponds to 79-99; the sequence is ENTSQSFSEACSTSVLRSTNA. The helical transmembrane segment at 100 to 120 threads the bilayer; sequence VSAVLCGVLVYEIIRFLGPNL. The Lumenal portion of the chain corresponds to 121–124; the sequence is SDRK. The helical transmembrane segment at 125–145 threads the bilayer; that stretch reads ATFMALVMSLYPLHWFFTFLY. Residues 146 to 170 lie on the Cytoplasmic side of the membrane; it reads YTDVASLTAVLAMYLTCLKRRYVLS. The chain crosses the membrane as a helical span at residues 171-191; that stretch reads ALFGTLAVFIRQTNVVWMLFV. Residues 192–285 lie on the Lumenal side of the membrane; sequence ACSGILDFTL…KWRILIKFSP (94 aa). The segment at 210-254 is disordered; it reads QEVNQELHQSSNKKGATLRSNLRKRKSDISSDTSDPFNHGQTVPS. Polar residues-rich tracts occupy residues 215–229 and 239–254; these read ELHQ…TLRS and SSDT…TVPS. A helical transmembrane segment spans residues 286-306; that stretch reads FIFVVVAFGIFILWNGGIVLG. The Cytoplasmic segment spans residues 307-311; the sequence is AKEAH. The helical transmembrane segment at 312 to 332 threads the bilayer; the sequence is VVSLHFAQIMYFSLVSALFTA. The Lumenal portion of the chain corresponds to 333–355; that stretch reads PLHFSVNQLRHQFHQLHRNWSLS. The N-linked (GlcNAc...) asparagine glycan is linked to N351. A helical transmembrane segment spans residues 356 to 376; sequence LILTLVALVAGFVSVHFFSLA. Residues 377–400 lie on the Cytoplasmic side of the membrane; that stretch reads HPYLLADNRHYPFYLWRKIINAHW. Residues 401 to 421 traverse the membrane as a helical segment; that stretch reads LMKYILVPVYVYSWFSILTLL. Residues 422–428 are Lumenal-facing; it reads AKTRRQT. Residues 429 to 449 traverse the membrane as a helical segment; the sequence is WILVYFLATCGVLVPTPLIEF. The Cytoplasmic portion of the chain corresponds to 450-472; sequence RYYTIPFYLFMLHSCVRSSSFAT. Residues 473-493 traverse the membrane as a helical segment; the sequence is WLLIGTIFVSINVFTMAMFLF. The Lumenal segment spans residues 494–509; sequence RPFKWSHEDGVQRFIW.

Belongs to the ALG10 glucosyltransferase family.

Its subcellular location is the endoplasmic reticulum membrane. It catalyses the reaction an alpha-D-Glc-(1-&gt;3)-alpha-D-Glc-(1-&gt;3)-alpha-D-Man-(1-&gt;2)-alpha-D-Man-(1-&gt;2)-alpha-D-Man-(1-&gt;3)-[alpha-D-Man-(1-&gt;2)-alpha-D-Man-(1-&gt;3)-[alpha-D-Man-(1-&gt;2)-alpha-D-Man-(1-&gt;6)]-alpha-D-Man-(1-&gt;6)]-beta-D-Man-(1-&gt;4)-beta-D-GlcNAc-(1-&gt;4)-alpha-D-GlcNAc-diphospho-di-trans,poly-cis-dolichol + a di-trans,poly-cis-dolichyl beta-D-glucosyl phosphate = a alpha-D-Glc-(1-&gt;2)-alpha-D-Glc-(1-&gt;3)-alpha-D-Glc-(1-&gt;3)-alpha-D-Man-(1-&gt;2)-alpha-D-Man-(1-&gt;2)-alpha-D-Man-(1-&gt;3)-[alpha-D-Man-(1-&gt;2)-alpha-D-Man-(1-&gt;3)-[alpha-D-Man-(1-&gt;2)-alpha-D-Man-(1-&gt;6)]-alpha-D-Man-(1-&gt;6)]-beta-D-Man-(1-&gt;4)-beta-D-GlcNAc-(1-&gt;4)-alpha-D-GlcNAc-diphospho-di-trans,poly-cis-dolichol + a di-trans,poly-cis-dolichyl phosphate + H(+). The protein operates within protein modification; protein glycosylation. Dol-P-Glc:Glc(2)Man(9)GlcNAc(2)-PP-Dol alpha-1,2-glucosyltransferase that operates in the biosynthetic pathway of dolichol-linked oligosaccharides, the glycan precursors employed in protein asparagine (N)-glycosylation. The assembly of dolichol-linked oligosaccharides begins on the cytosolic side of the endoplasmic reticulum membrane and finishes in its lumen. The sequential addition of sugars to dolichol pyrophosphate produces dolichol-linked oligosaccharides containing fourteen sugars, including two GlcNAcs, nine mannoses and three glucoses. Once assembled, the oligosaccharide is transferred from the lipid to nascent proteins by oligosaccharyltransferases. In the lumen of the endoplasmic reticulum, adds the third and last glucose residue from dolichyl phosphate glucose (Dol-P-Glc) onto the lipid-linked oligosaccharide intermediate Glc(2)Man(9)GlcNAc(2)-PP-Dol to produce Glc(3)Man(9)GlcNAc(2)-PP-Dol. The polypeptide is Dol-P-Glc:Glc(2)Man(9)GlcNAc(2)-PP-Dol alpha-1,2-glucosyltransferase (Arabidopsis thaliana (Mouse-ear cress)).